Here is a 156-residue protein sequence, read N- to C-terminus: C-type lectin lectoxin-Phi2 (156 aa).

Positions 1 to 23 (MGRFIFVSLGLLVLAFSLSGIGA) are cleaved as a signal peptide. Intrachain disulfides connect C27/C38, C55/C154, and C129/C146. The region spanning 34 to 155 (HNVSCYKLIN…CNRRHRFLCK (122 aa)) is the C-type lectin domain. N-linked (GlcNAc...) asparagine glycans are attached at residues N35 and N109. The Mannose-binding signature appears at 119 to 121 (EPN). The Ca(2+) site is built by E127, N142, and D143.

The protein belongs to the true venom lectin family. As to expression, expressed by the venom gland.

Its subcellular location is the secreted. In terms of biological role, mannose-binding lectin which recognizes specific carbohydrate structures and agglutinates a variety of animal cells by binding to cell-surface glycoproteins and glycolipids. May be a calcium-dependent lectin. This chain is C-type lectin lectoxin-Phi2, found in Philodryas olfersii (Green snake).